Here is a 1034-residue protein sequence, read N- to C-terminus: Error-prone DNA polymerase (1034 aa).

The protein belongs to the DNA polymerase type-C family. DnaE2 subfamily.

The protein resides in the cytoplasm. The enzyme catalyses DNA(n) + a 2'-deoxyribonucleoside 5'-triphosphate = DNA(n+1) + diphosphate. In terms of biological role, DNA polymerase involved in damage-induced mutagenesis and translesion synthesis (TLS). It is not the major replicative DNA polymerase. The sequence is that of Error-prone DNA polymerase from Pseudomonas fluorescens (strain ATCC BAA-477 / NRRL B-23932 / Pf-5).